The primary structure comprises 830 residues: Penicillin-binding protein 1A (830 aa).

The segment covering Met-1–Ser-17 has biased composition (basic residues). A disordered region spans residues Met-1–Asn-20. Residues Met-1–Trp-30 lie on the Cytoplasmic side of the membrane. A helical; Signal-anchor for type II membrane protein transmembrane segment spans residues Phe-31 to Leu-51. Residues Ser-52 to Gln-830 lie on the Extracellular side of the membrane. A transglycosylase region spans residues Ser-72 to Ala-244. Glu-111 acts as the Proton donor; for transglycosylase activity in catalysis. Residues Ala-378–Gly-663 are transpeptidase. The active-site Acyl-ester intermediate; for transpeptidase activity is Ser-417. The disordered stretch occupies residues Ala-731–Gln-830. The segment covering Asn-735–Asn-746 has biased composition (low complexity). Basic and acidic residues predominate over residues Lys-747–Pro-758. 2 stretches are compositionally biased toward low complexity: residues Asn-759 to Asn-807 and Gly-816 to Gln-830.

It in the N-terminal section; belongs to the glycosyltransferase 51 family. In the C-terminal section; belongs to the transpeptidase family.

Its subcellular location is the cell membrane. The enzyme catalyses [GlcNAc-(1-&gt;4)-Mur2Ac(oyl-L-Ala-gamma-D-Glu-L-Lys-D-Ala-D-Ala)](n)-di-trans,octa-cis-undecaprenyl diphosphate + beta-D-GlcNAc-(1-&gt;4)-Mur2Ac(oyl-L-Ala-gamma-D-Glu-L-Lys-D-Ala-D-Ala)-di-trans,octa-cis-undecaprenyl diphosphate = [GlcNAc-(1-&gt;4)-Mur2Ac(oyl-L-Ala-gamma-D-Glu-L-Lys-D-Ala-D-Ala)](n+1)-di-trans,octa-cis-undecaprenyl diphosphate + di-trans,octa-cis-undecaprenyl diphosphate + H(+). It catalyses the reaction Preferential cleavage: (Ac)2-L-Lys-D-Ala-|-D-Ala. Also transpeptidation of peptidyl-alanyl moieties that are N-acyl substituents of D-alanine.. The protein operates within cell wall biogenesis; peptidoglycan biosynthesis. Cell wall formation. Synthesis of cross-linked peptidoglycan from the lipid intermediates. The enzyme has a penicillin-insensitive transglycosylase N-terminal domain (formation of linear glycan strands) and a penicillin-sensitive transpeptidase C-terminal domain (cross-linking of the peptide subunits). The sequence is that of Penicillin-binding protein 1A (pbpA) from Clostridium perfringens (strain ATCC 13124 / DSM 756 / JCM 1290 / NCIMB 6125 / NCTC 8237 / Type A).